The primary structure comprises 331 residues: Mitochondrial respiration co-chaperone MRJ1 (331 aa).

The N-terminal 36 residues, 1–36, are a transit peptide targeting the mitochondrion; it reads MLSFQATVRPLAVSSRLHSPAAHIWRRNAHTAAMSD. The interval 35–66 is disordered; the sequence is SDDSLDQGSSSSYGDSASQPHLGKGKGRQDSL. The segment covering 40 to 53 has biased composition (low complexity); sequence DQGSSSSYGDSASQ. The 65-residue stretch at 83–147 folds into the J domain; that stretch reads DPFEVMALDR…SSRSAFLKTG (65 aa). The interval 203–226 is disordered; it reads DGSQGWRPYEDPSKGFSPPTSGPA. The region spanning 275 to 303 is the IQ domain; sequence RALAQARYEAATHGHIRREQIRRRVREAE.

This sequence belongs to the DnaJ family. In terms of assembly, interacts with QCR2.

Its subcellular location is the mitochondrion. Functionally, mitochondrial co-chaperone required for ubiquinol-cytochrome c oxidoreductase (mitochondrial respiratory chain complex III) activity. The chain is Mitochondrial respiration co-chaperone MRJ1 from Cryptococcus neoformans var. grubii serotype A (strain H99 / ATCC 208821 / CBS 10515 / FGSC 9487) (Filobasidiella neoformans var. grubii).